We begin with the raw amino-acid sequence, 356 residues long: Histidinol-phosphate aminotransferase (356 aa).

Position 214 is an N6-(pyridoxal phosphate)lysine (lysine 214).

This sequence belongs to the class-II pyridoxal-phosphate-dependent aminotransferase family. Histidinol-phosphate aminotransferase subfamily. As to quaternary structure, homodimer. Requires pyridoxal 5'-phosphate as cofactor.

It carries out the reaction L-histidinol phosphate + 2-oxoglutarate = 3-(imidazol-4-yl)-2-oxopropyl phosphate + L-glutamate. It participates in amino-acid biosynthesis; L-histidine biosynthesis; L-histidine from 5-phospho-alpha-D-ribose 1-diphosphate: step 7/9. The polypeptide is Histidinol-phosphate aminotransferase (Shigella boydii serotype 18 (strain CDC 3083-94 / BS512)).